A 379-amino-acid chain; its full sequence is UDP-4-amino-4-deoxy-L-arabinose--oxoglutarate aminotransferase (379 aa).

Lysine 182 is subject to N6-(pyridoxal phosphate)lysine.

This sequence belongs to the DegT/DnrJ/EryC1 family. ArnB subfamily. In terms of assembly, homodimer. It depends on pyridoxal 5'-phosphate as a cofactor.

It carries out the reaction UDP-4-amino-4-deoxy-beta-L-arabinose + 2-oxoglutarate = UDP-beta-L-threo-pentopyranos-4-ulose + L-glutamate. It functions in the pathway nucleotide-sugar biosynthesis; UDP-4-deoxy-4-formamido-beta-L-arabinose biosynthesis; UDP-4-deoxy-4-formamido-beta-L-arabinose from UDP-alpha-D-glucuronate: step 2/3. It participates in bacterial outer membrane biogenesis; lipopolysaccharide biosynthesis. Functionally, catalyzes the conversion of UDP-4-keto-arabinose (UDP-Ara4O) to UDP-4-amino-4-deoxy-L-arabinose (UDP-L-Ara4N). The modified arabinose is attached to lipid A and is required for resistance to polymyxin and cationic antimicrobial peptides. In Erwinia tasmaniensis (strain DSM 17950 / CFBP 7177 / CIP 109463 / NCPPB 4357 / Et1/99), this protein is UDP-4-amino-4-deoxy-L-arabinose--oxoglutarate aminotransferase.